A 1166-amino-acid polypeptide reads, in one-letter code: DNA-directed RNA polymerase subunit beta (1166 aa).

It belongs to the RNA polymerase beta chain family. The RNAP catalytic core consists of 2 alpha, 1 beta, 1 beta' and 1 omega subunit. When a sigma factor is associated with the core the holoenzyme is formed, which can initiate transcription.

The catalysed reaction is RNA(n) + a ribonucleoside 5'-triphosphate = RNA(n+1) + diphosphate. DNA-dependent RNA polymerase catalyzes the transcription of DNA into RNA using the four ribonucleoside triphosphates as substrates. The polypeptide is DNA-directed RNA polymerase subunit beta (Nocardioides sp. (strain ATCC BAA-499 / JS614)).